A 324-amino-acid polypeptide reads, in one-letter code: Methionyl-tRNA formyltransferase (324 aa).

(6S)-5,6,7,8-tetrahydrofolate is bound at residue 114–117; it reads SLLP.

This sequence belongs to the Fmt family.

The catalysed reaction is L-methionyl-tRNA(fMet) + (6R)-10-formyltetrahydrofolate = N-formyl-L-methionyl-tRNA(fMet) + (6S)-5,6,7,8-tetrahydrofolate + H(+). Its function is as follows. Attaches a formyl group to the free amino group of methionyl-tRNA(fMet). The formyl group appears to play a dual role in the initiator identity of N-formylmethionyl-tRNA by promoting its recognition by IF2 and preventing the misappropriation of this tRNA by the elongation apparatus. This chain is Methionyl-tRNA formyltransferase, found in Azobacteroides pseudotrichonymphae genomovar. CFP2.